Here is a 347-residue protein sequence, read N- to C-terminus: Holliday junction branch migration complex subunit RuvB (347 aa).

The tract at residues 4–186 (INEYGSERIV…FGMIFEMNFY (183 aa)) is large ATPase domain (RuvB-L). Residues leucine 25, arginine 26, glycine 67, lysine 70, threonine 71, threonine 72, 133–135 (EDF), arginine 176, tyrosine 186, and arginine 223 each bind ATP. Threonine 71 lines the Mg(2+) pocket. The segment at 187–257 (TQEELKMIIT…IVEEVMRLLG (71 aa)) is small ATPAse domain (RuvB-S). Residues 260 to 347 (EFGLDEMDRK…GLFDGFGNIE (88 aa)) are head domain (RuvB-H). Residues arginine 315 and arginine 320 each coordinate DNA.

This sequence belongs to the RuvB family. Homohexamer. Forms an RuvA(8)-RuvB(12)-Holliday junction (HJ) complex. HJ DNA is sandwiched between 2 RuvA tetramers; dsDNA enters through RuvA and exits via RuvB. An RuvB hexamer assembles on each DNA strand where it exits the tetramer. Each RuvB hexamer is contacted by two RuvA subunits (via domain III) on 2 adjacent RuvB subunits; this complex drives branch migration. In the full resolvosome a probable DNA-RuvA(4)-RuvB(12)-RuvC(2) complex forms which resolves the HJ.

Its subcellular location is the cytoplasm. The catalysed reaction is ATP + H2O = ADP + phosphate + H(+). Its function is as follows. The RuvA-RuvB-RuvC complex processes Holliday junction (HJ) DNA during genetic recombination and DNA repair, while the RuvA-RuvB complex plays an important role in the rescue of blocked DNA replication forks via replication fork reversal (RFR). RuvA specifically binds to HJ cruciform DNA, conferring on it an open structure. The RuvB hexamer acts as an ATP-dependent pump, pulling dsDNA into and through the RuvAB complex. RuvB forms 2 homohexamers on either side of HJ DNA bound by 1 or 2 RuvA tetramers; 4 subunits per hexamer contact DNA at a time. Coordinated motions by a converter formed by DNA-disengaged RuvB subunits stimulates ATP hydrolysis and nucleotide exchange. Immobilization of the converter enables RuvB to convert the ATP-contained energy into a lever motion, pulling 2 nucleotides of DNA out of the RuvA tetramer per ATP hydrolyzed, thus driving DNA branch migration. The RuvB motors rotate together with the DNA substrate, which together with the progressing nucleotide cycle form the mechanistic basis for DNA recombination by continuous HJ branch migration. Branch migration allows RuvC to scan DNA until it finds its consensus sequence, where it cleaves and resolves cruciform DNA. This is Holliday junction branch migration complex subunit RuvB from Fervidobacterium nodosum (strain ATCC 35602 / DSM 5306 / Rt17-B1).